A 388-amino-acid chain; its full sequence is L-cysteine desulfidase (388 aa).

C25 functions as the Proton acceptor in the catalytic mechanism. The [4Fe-4S] cluster site is built by C282, C322, and C329.

This sequence belongs to the L-cysteine desulfidase family. In terms of assembly, homotrimer. [4Fe-4S] cluster is required as a cofactor.

It carries out the reaction L-cysteine + H2O = hydrogen sulfide + pyruvate + NH4(+) + H(+). In terms of biological role, catalyzes the cleavage of L-cysteine to form 2-aminoprop-2-enoate and sulfide. The former then spontaneously hydrolyzes to pyruvate and NH(3). May be responsible for the production of sulfide required for the biosynthesis of iron-sulfur centers in this archaea. Is very specific for L-cysteine, with no activity being detected with D-cysteine, L-homocysteine, 3-mercaptopropionate (cysteine without the amino group), cysteamine (cysteine without the carboxylate), or mercaptolactate (the hydroxyl analog of cysteine). The sequence is that of L-cysteine desulfidase from Methanocaldococcus jannaschii (strain ATCC 43067 / DSM 2661 / JAL-1 / JCM 10045 / NBRC 100440) (Methanococcus jannaschii).